The sequence spans 652 residues: Carboxypeptidase Z (652 aa).

Positions 1 to 20 (MPTTPLLLAALAALAALAVA) are cleaved as a signal peptide. An FZ domain is found at 41 to 163 (THSATCVDLH…APEEEGCYDP (123 aa)). 5 disulfides stabilise this stretch: C46–C112, C54–C105, C96–C132, C121–C160, and C125–C149. A glycan (N-linked (GlcNAc...) asparagine) is linked at N60. Residues 189–505 (AHHSYAQMVR…EPLLNFLEMV (317 aa)) form the Peptidase M14 domain. Zn(2+) is bound by residues H251 and E254. A glycan (N-linked (GlcNAc...) asparagine) is linked at N284. H383 lines the Zn(2+) pocket. E475 acts as the Proton donor/acceptor in catalysis. The tract at residues 594 to 628 (FLPGPSRALPRSLDPQGAPAQLDFEPPRARRQPAS) is disordered.

Belongs to the peptidase M14 family. Zn(2+) is required as a cofactor. Abundantly expressed in the placenta, with low to moderate levels in the brain, lung, thymus and kidney.

Its subcellular location is the secreted. The protein resides in the extracellular space. The protein localises to the extracellular matrix. Inhibited by 2-mercaptomethyl-3-guanidinoethylthiopropanoic acid (MGTA) and guanidinoethylmercaptosuccinic acid (GEMSA). Inhibited by chelating agents such as EDTA and EGTA. Its function is as follows. Cleaves substrates with C-terminal arginine residues. Probably modulates the Wnt signaling pathway, by cleaving some undefined protein. May play a role in cleavage during prohormone processing. This is Carboxypeptidase Z (Cpz) from Rattus norvegicus (Rat).